We begin with the raw amino-acid sequence, 297 residues long: Bifunctional protein FolD (297 aa).

Residues 167–169, S192, and I233 contribute to the NADP(+) site; that span reads GRS.

Belongs to the tetrahydrofolate dehydrogenase/cyclohydrolase family. In terms of assembly, homodimer.

The enzyme catalyses (6R)-5,10-methylene-5,6,7,8-tetrahydrofolate + NADP(+) = (6R)-5,10-methenyltetrahydrofolate + NADPH. The catalysed reaction is (6R)-5,10-methenyltetrahydrofolate + H2O = (6R)-10-formyltetrahydrofolate + H(+). Its pathway is one-carbon metabolism; tetrahydrofolate interconversion. In terms of biological role, catalyzes the oxidation of 5,10-methylenetetrahydrofolate to 5,10-methenyltetrahydrofolate and then the hydrolysis of 5,10-methenyltetrahydrofolate to 10-formyltetrahydrofolate. The protein is Bifunctional protein FolD of Caulobacter vibrioides (strain ATCC 19089 / CIP 103742 / CB 15) (Caulobacter crescentus).